Consider the following 181-residue polypeptide: Shikimate kinase 2 (181 aa).

Residue 12–17 (GCGKTT) coordinates ATP. Residues Thr-16 and Asp-32 each coordinate Mg(2+). Substrate contacts are provided by Asp-34, Arg-58, and Gly-79. The segment at 112–126 (EAEPEVGLRPTLTGK) is LID domain. Residue Arg-120 participates in ATP binding. Arg-139 is a binding site for substrate.

Belongs to the shikimate kinase family. AroL subfamily. As to quaternary structure, monomer. The cofactor is Mg(2+).

It localises to the cytoplasm. The catalysed reaction is shikimate + ATP = 3-phosphoshikimate + ADP + H(+). Its pathway is metabolic intermediate biosynthesis; chorismate biosynthesis; chorismate from D-erythrose 4-phosphate and phosphoenolpyruvate: step 5/7. Functionally, catalyzes the specific phosphorylation of the 3-hydroxyl group of shikimic acid using ATP as a cosubstrate. The sequence is that of Shikimate kinase 2 from Escherichia fergusonii (strain ATCC 35469 / DSM 13698 / CCUG 18766 / IAM 14443 / JCM 21226 / LMG 7866 / NBRC 102419 / NCTC 12128 / CDC 0568-73).